We begin with the raw amino-acid sequence, 192 residues long: Crossover junction endodeoxyribonuclease RuvC (192 aa).

Catalysis depends on residues Asp9, Glu70, and Asp143. Residues Asp9, Glu70, and Asp143 each contribute to the Mg(2+) site. Residues 161 to 192 form a disordered region; sequence GASVATTGPGSSSLTPAQRAWAEAEAKARRAR. The segment covering 163–176 has biased composition (polar residues); sequence SVATTGPGSSSLTP. The span at 182-192 shows a compositional bias: basic and acidic residues; sequence AEAEAKARRAR.

The protein belongs to the RuvC family. As to quaternary structure, homodimer which binds Holliday junction (HJ) DNA. The HJ becomes 2-fold symmetrical on binding to RuvC with unstacked arms; it has a different conformation from HJ DNA in complex with RuvA. In the full resolvosome a probable DNA-RuvA(4)-RuvB(12)-RuvC(2) complex forms which resolves the HJ. Requires Mg(2+) as cofactor.

It localises to the cytoplasm. The catalysed reaction is Endonucleolytic cleavage at a junction such as a reciprocal single-stranded crossover between two homologous DNA duplexes (Holliday junction).. Functionally, the RuvA-RuvB-RuvC complex processes Holliday junction (HJ) DNA during genetic recombination and DNA repair. Endonuclease that resolves HJ intermediates. Cleaves cruciform DNA by making single-stranded nicks across the HJ at symmetrical positions within the homologous arms, yielding a 5'-phosphate and a 3'-hydroxyl group; requires a central core of homology in the junction. The consensus cleavage sequence is 5'-(A/T)TT(C/G)-3'. Cleavage occurs on the 3'-side of the TT dinucleotide at the point of strand exchange. HJ branch migration catalyzed by RuvA-RuvB allows RuvC to scan DNA until it finds its consensus sequence, where it cleaves and resolves the cruciform DNA. The chain is Crossover junction endodeoxyribonuclease RuvC from Pseudarthrobacter chlorophenolicus (strain ATCC 700700 / DSM 12829 / CIP 107037 / JCM 12360 / KCTC 9906 / NCIMB 13794 / A6) (Arthrobacter chlorophenolicus).